The sequence spans 337 residues: Glycine N(alpha)-acyltransferase (337 aa).

Belongs to the acetyltransferase family.

It catalyses the reaction a (3R)-hydroxyacyl-[ACP] + glycine = a lyso-glycine lipid + holo-[ACP] + H(+). The enzyme catalyses (3R)-hydroxyhexadecanoyl-[ACP] + glycine = N-[(3R)-3-hydroxyhexadecanoyl]-glycine + holo-[ACP] + H(+). It functions in the pathway lipid metabolism. Functionally, is involved in the production of glycine lipids (GL), which are phosphorus-free membrane lipids important for fitness during growth of the human gut bacterium B.thetaiotaomicron in vivo and in vitro. Catalyzes the first step of GL biosynthesis, i.e. the N-acylation of glycine via addition of a 3-hydroxy fatty acyl group, to form a range of monoacylated glycine (also named lyso-glycine lipids or lyso-GL). Is important for the ability of B.thetaiotaomicron to adapt to stress and colonize the mammalian gut. Also seems to be required for the production of flavolipin, an acylated serine-glycine dipeptide. In Bacteroides thetaiotaomicron (strain ATCC 29148 / DSM 2079 / JCM 5827 / CCUG 10774 / NCTC 10582 / VPI-5482 / E50), this protein is Glycine N(alpha)-acyltransferase.